The sequence spans 609 residues: Kelch domain-containing protein 10 homolog (609 aa).

The tract at residues 103–146 is disordered; sequence ASDLDEEEEEEDDDVDVDVDYGDTDSESEFEEMYSDEWTSSSDE. The span at 104 to 137 shows a compositional bias: acidic residues; sequence SDLDEEEEEEDDDVDVDVDYGDTDSESEFEEMYS. Kelch repeat units lie at residues 214-277, 279-334, 335-381, 389-437, 458-508, and 510-554; these read HLYS…IHNN, LISH…IHKH, FLYT…RYRH, HIFV…GNRG, EAFI…HSDN, and CMYV…YNDN. Residues 576 to 609 form a disordered region; the sequence is LPPQRRRRLDTSQPDPSMLISLYSNPKRARSSTQ.

As to quaternary structure, interacts with Elongin-C; may be the substrate recognition component of an E3 ubiquitin ligase complex.

Its function is as follows. Activates the Pk92B/DASK1-MAPK signaling cascade. The sequence is that of Kelch domain-containing protein 10 homolog (slim) from Drosophila melanogaster (Fruit fly).